A 190-amino-acid chain; its full sequence is Probable E3 ubiquitin-protein ligase RHB1A (190 aa).

The segment at 139-180 (CPICFEDYDVENPRLTTKCEHEFHLSCLLEWIERSDRCPICD) adopts an RING-type; atypical zinc-finger fold.

The catalysed reaction is S-ubiquitinyl-[E2 ubiquitin-conjugating enzyme]-L-cysteine + [acceptor protein]-L-lysine = [E2 ubiquitin-conjugating enzyme]-L-cysteine + N(6)-ubiquitinyl-[acceptor protein]-L-lysine.. Its pathway is protein modification; protein ubiquitination. Probable E3 ubiquitin-protein ligase that may possess E3 ubiquitin ligase activity in vitro. In Arabidopsis thaliana (Mouse-ear cress), this protein is Probable E3 ubiquitin-protein ligase RHB1A.